The sequence spans 321 residues: Torsin-2A (321 aa).

A signal peptide spans 1–27 (MAVARHGCPPWGSILGLLVLALAAAAA). 93–100 (GWTGTGKS) lines the ATP pocket. A glycan (N-linked (GlcNAc...) asparagine) is linked at Asn-149.

It belongs to the ClpA/ClpB family. Torsin subfamily. As to quaternary structure, homohexamer. Interacts with TOR1AIP1.

The protein localises to the endoplasmic reticulum lumen. The polypeptide is Torsin-2A (Tor2a) (Rattus norvegicus (Rat)).